Reading from the N-terminus, the 805-residue chain is Translation initiation factor IF-2 (805 aa).

Disordered stretches follow at residues 68–89 and 141–215; these read VVTE…EKKE and KEKE…KEKK. Basic and acidic residues predominate over residues 79-89; the sequence is VEEKKEEEKKE. A tr-type G domain is found at 306 to 474; the sequence is PRPPIVVVMG…MILLLADILE (169 aa). Positions 315 to 322 are G1; it reads GHVDHGKT. 315-322 is a GTP binding site; the sequence is GHVDHGKT. A G2 region spans residues 340–344; that stretch reads GITQH. Residues 362–365 are G3; the sequence is DTPG. Residues 362–366 and 416–419 contribute to the GTP site; these read DTPGH and NKID. A G4 region spans residues 416–419; it reads NKID. The interval 452 to 454 is G5; that stretch reads SAK.

This sequence belongs to the TRAFAC class translation factor GTPase superfamily. Classic translation factor GTPase family. IF-2 subfamily.

The protein resides in the cytoplasm. One of the essential components for the initiation of protein synthesis. Protects formylmethionyl-tRNA from spontaneous hydrolysis and promotes its binding to the 30S ribosomal subunits. Also involved in the hydrolysis of GTP during the formation of the 70S ribosomal complex. In Aquifex aeolicus (strain VF5), this protein is Translation initiation factor IF-2 (infB).